Here is a 211-residue protein sequence, read N- to C-terminus: ATP-dependent Clp protease proteolytic subunit (211 aa).

Ser106 acts as the Nucleophile in catalysis. Residue His131 is part of the active site.

It belongs to the peptidase S14 family. Fourteen ClpP subunits assemble into 2 heptameric rings which stack back to back to give a disk-like structure with a central cavity, resembling the structure of eukaryotic proteasomes.

The protein resides in the cytoplasm. The enzyme catalyses Hydrolysis of proteins to small peptides in the presence of ATP and magnesium. alpha-casein is the usual test substrate. In the absence of ATP, only oligopeptides shorter than five residues are hydrolyzed (such as succinyl-Leu-Tyr-|-NHMec, and Leu-Tyr-Leu-|-Tyr-Trp, in which cleavage of the -Tyr-|-Leu- and -Tyr-|-Trp bonds also occurs).. Its function is as follows. Cleaves peptides in various proteins in a process that requires ATP hydrolysis. Has a chymotrypsin-like activity. Plays a major role in the degradation of misfolded proteins. This Rhodopseudomonas palustris (strain BisA53) protein is ATP-dependent Clp protease proteolytic subunit.